The sequence spans 210 residues: Redox-sensing transcriptional repressor Rex (210 aa).

Residues 16–55 (VYSRHLTDVDRKGIVTISSGDIAEGVGVSPAQVRKDLAYF) constitute a DNA-binding region (H-T-H motif). 90-95 (GMGNLG) is a binding site for NAD(+).

The protein belongs to the transcriptional regulatory Rex family. As to quaternary structure, homodimer.

It localises to the cytoplasm. In terms of biological role, modulates transcription in response to changes in cellular NADH/NAD(+) redox state. This is Redox-sensing transcriptional repressor Rex from Desulfitobacterium hafniense (strain DSM 10664 / DCB-2).